We begin with the raw amino-acid sequence, 186 residues long: Large ribosomal subunit protein uL5 (186 aa).

The protein belongs to the universal ribosomal protein uL5 family. Part of the 50S ribosomal subunit; part of the 5S rRNA/L5/L18/L25 subcomplex. Contacts the 5S rRNA and the P site tRNA. Forms a bridge to the 30S subunit in the 70S ribosome.

Its function is as follows. This is one of the proteins that bind and probably mediate the attachment of the 5S RNA into the large ribosomal subunit, where it forms part of the central protuberance. In the 70S ribosome it contacts protein S13 of the 30S subunit (bridge B1b), connecting the 2 subunits; this bridge is implicated in subunit movement. Contacts the P site tRNA; the 5S rRNA and some of its associated proteins might help stabilize positioning of ribosome-bound tRNAs. The protein is Large ribosomal subunit protein uL5 of Legionella pneumophila subsp. pneumophila (strain Philadelphia 1 / ATCC 33152 / DSM 7513).